The primary structure comprises 323 residues: MEKQVEIPEVELNSGHKMPIVGYGTCVPEPMPPLEELTAIFLDAIKVGYRHFDTASSYGTEEALGKAIAEAINSGLVKSREEFFISCKLWIEDADHDLILPALNQSLQILGVDYLDLYMIHMPVRVRKGAPMFNYSKEDFLPFDIQGTWKAMEECSKQGLAKSIGVSNYSVEKLTKLLETSTIPPAVNQVEMNVAWQQRKLLPFCKEKNIHITSWSPLLSYGVAWGSNAVMENPVLQQIAASKGKTVAQVALRWIYEQGASLITRTSNKDRMFENVQIFDWELSKEELDQIHEIPQRRGTLGEEFMHPEGPIKSPEELWDGDL.

Residue Asp-53 participates in NADP(+) binding. The active-site Proton donor is Tyr-58. Position 121 (His-121) interacts with substrate. Residues 167 to 168, Gln-189, 215 to 220, and 289 to 297 contribute to the NADP(+) site; these read SN, WSPLLS, and DQIHEIPQR. The segment at 302–323 is disordered; that stretch reads GEEFMHPEGPIKSPEELWDGDL.

It belongs to the aldo/keto reductase family. Monomer. In terms of tissue distribution, expressed in leaf epidermis.

The enzyme catalyses 15alpha-stemmadenine + NADP(+) = 17-dehydrostemmadenine + NADPH + 2 H(+). Its pathway is alkaloid biosynthesis. Functionally, component of iboga and aspidosperma monoterpenoid indole alkaloids (MIAs, e.g. tabersonine and catharanthine) biosynthesis pathway from 19E-geissoschizine. Catalyzes the second oxidation step of the unstable intermediate product resulting from the reaction triggered by the geissoschizine oxidase (GO) in the stemmadenine biosynthesis process from 19E-geissoschizine. The protein is Protein REDOX 2 of Catharanthus roseus (Madagascar periwinkle).